We begin with the raw amino-acid sequence, 145 residues long: D-aminoacyl-tRNA deacylase (145 aa).

Positions 137–138 match the Gly-cisPro motif, important for rejection of L-amino acids motif; sequence GP.

Belongs to the DTD family. Homodimer.

It is found in the cytoplasm. The catalysed reaction is glycyl-tRNA(Ala) + H2O = tRNA(Ala) + glycine + H(+). It carries out the reaction a D-aminoacyl-tRNA + H2O = a tRNA + a D-alpha-amino acid + H(+). An aminoacyl-tRNA editing enzyme that deacylates mischarged D-aminoacyl-tRNAs. Also deacylates mischarged glycyl-tRNA(Ala), protecting cells against glycine mischarging by AlaRS. Acts via tRNA-based rather than protein-based catalysis; rejects L-amino acids rather than detecting D-amino acids in the active site. By recycling D-aminoacyl-tRNA to D-amino acids and free tRNA molecules, this enzyme counteracts the toxicity associated with the formation of D-aminoacyl-tRNA entities in vivo and helps enforce protein L-homochirality. This chain is D-aminoacyl-tRNA deacylase, found in Pseudoalteromonas translucida (strain TAC 125).